The sequence spans 421 residues: Nuclear speckle RNA-binding protein B (421 aa).

3 disordered regions span residues 1 to 64 (MDNR…VNIY), 86 to 114 (TGQTSTSTTSSSSSSSTSEPKDTSTMVDT), and 197 to 226 (TDPQEGTPYLIPSGDMHSYLSQDEDRGIPH). Residues 33-44 (PLAPPHPQPQPP) are compositionally biased toward pro residues. The span at 89-103 (TSTSTTSSSSSSSTS) shows a compositional bias: low complexity. The region spanning 323-409 (NTLYVEGLPS…KILRLQFFRN (87 aa)) is the RRM domain.

Isoform 1: Expressed in root meristems, lateral root primordia, root vascular tissues and cotyledon vascular tissues. Isoform 2: Expressed in root meristems, lateral root primordia and root vascular tissues.

The protein resides in the nucleus speckle. In terms of biological role, alternative splicing (AS) regulator that binds to specific mRNAs and modulates auxin effects on the transcriptome. Displaced from its targets upon binding to AS competitor long non-coding RNA (ASCO-RNA). The protein is Nuclear speckle RNA-binding protein B of Arabidopsis thaliana (Mouse-ear cress).